A 579-amino-acid chain; its full sequence is Arginine--tRNA ligase (579 aa).

The 'HIGH' region motif lies at 127–137 (PNLAKEMHVGH).

It belongs to the class-I aminoacyl-tRNA synthetase family. As to quaternary structure, monomer.

It localises to the cytoplasm. The enzyme catalyses tRNA(Arg) + L-arginine + ATP = L-arginyl-tRNA(Arg) + AMP + diphosphate. The polypeptide is Arginine--tRNA ligase (Azotobacter vinelandii (strain DJ / ATCC BAA-1303)).